The primary structure comprises 442 residues: Cyclic adenylate deaminase (442 aa).

This sequence belongs to the metallo-dependent hydrolases superfamily. Adenosine and AMP deaminases family. The cofactor is Zn(2+).

It catalyses the reaction 3',5'-cyclic AMP + H2O + H(+) = 3',5'-cyclic IMP + NH4(+). Functionally, deaminates cAMP into cIMP, thereby repressing cAMP dependent metabolism or genes. This is Cyclic adenylate deaminase (add) from Leptospira interrogans serogroup Icterohaemorrhagiae serovar copenhageni (strain Fiocruz L1-130).